The sequence spans 451 residues: Heat shock factor protein (451 aa).

Residues 12-117 mediate DNA binding; that stretch reads VPAFLAKLWT…LLENIKRKVN (106 aa). Disordered regions lie at residues 210–273 and 285–307; these read LNDS…LEAS and LTPS…PISP. Polar residues predominate over residues 232–246; sequence PSSTSYPVSGFTDSS.

This sequence belongs to the HSF family. Homotrimer. In terms of processing, exhibits temperature-dependent phosphorylation.

The protein resides in the nucleus. Its function is as follows. DNA-binding protein that specifically binds heat shock promoter elements (HSE) and activates transcription. The protein is Heat shock factor protein (hsf1) of Xenopus laevis (African clawed frog).